Here is a 150-residue protein sequence, read N- to C-terminus: Large ribosomal subunit protein bL9 (150 aa).

Belongs to the bacterial ribosomal protein bL9 family.

Its function is as follows. Binds to the 23S rRNA. This Photorhabdus laumondii subsp. laumondii (strain DSM 15139 / CIP 105565 / TT01) (Photorhabdus luminescens subsp. laumondii) protein is Large ribosomal subunit protein bL9.